The chain runs to 177 residues: Cytidylate kinase (177 aa).

An ATP-binding site is contributed by 7–15 (GSPGSGTTT).

This sequence belongs to the cytidylate kinase family. Type 2 subfamily.

It localises to the cytoplasm. It carries out the reaction CMP + ATP = CDP + ADP. The catalysed reaction is dCMP + ATP = dCDP + ADP. In Methanocorpusculum labreanum (strain ATCC 43576 / DSM 4855 / Z), this protein is Cytidylate kinase.